The following is a 445-amino-acid chain: Bifunctional protein GlmU (445 aa).

The interval methionine 1–arginine 218 is pyrophosphorylase. UDP-N-acetyl-alpha-D-glucosamine contacts are provided by residues leucine 6–glycine 9, lysine 20, glutamine 69, glycine 74–threonine 75, tyrosine 96–aspartate 98, glycine 134, glutamate 147, asparagine 162, and asparagine 216. Aspartate 98 contributes to the Mg(2+) binding site. A Mg(2+)-binding site is contributed by asparagine 216. Residues lysine 219–asparagine 239 are linker. The tract at residues glycine 240 to glutamate 445 is N-acetyltransferase. Residues arginine 321 and lysine 339 each contribute to the UDP-N-acetyl-alpha-D-glucosamine site. Histidine 351 functions as the Proton acceptor in the catalytic mechanism. Positions 354 and 365 each coordinate UDP-N-acetyl-alpha-D-glucosamine. Residues alanine 368, asparagine 374 to tyrosine 375, serine 393, alanine 411, and arginine 428 each bind acetyl-CoA.

It in the N-terminal section; belongs to the N-acetylglucosamine-1-phosphate uridyltransferase family. In the C-terminal section; belongs to the transferase hexapeptide repeat family. In terms of assembly, homotrimer. Requires Mg(2+) as cofactor.

It localises to the cytoplasm. It carries out the reaction alpha-D-glucosamine 1-phosphate + acetyl-CoA = N-acetyl-alpha-D-glucosamine 1-phosphate + CoA + H(+). It catalyses the reaction N-acetyl-alpha-D-glucosamine 1-phosphate + UTP + H(+) = UDP-N-acetyl-alpha-D-glucosamine + diphosphate. It participates in nucleotide-sugar biosynthesis; UDP-N-acetyl-alpha-D-glucosamine biosynthesis; N-acetyl-alpha-D-glucosamine 1-phosphate from alpha-D-glucosamine 6-phosphate (route II): step 2/2. Its pathway is nucleotide-sugar biosynthesis; UDP-N-acetyl-alpha-D-glucosamine biosynthesis; UDP-N-acetyl-alpha-D-glucosamine from N-acetyl-alpha-D-glucosamine 1-phosphate: step 1/1. The protein operates within bacterial outer membrane biogenesis; LPS lipid A biosynthesis. Its function is as follows. Catalyzes the last two sequential reactions in the de novo biosynthetic pathway for UDP-N-acetylglucosamine (UDP-GlcNAc). The C-terminal domain catalyzes the transfer of acetyl group from acetyl coenzyme A to glucosamine-1-phosphate (GlcN-1-P) to produce N-acetylglucosamine-1-phosphate (GlcNAc-1-P), which is converted into UDP-GlcNAc by the transfer of uridine 5-monophosphate (from uridine 5-triphosphate), a reaction catalyzed by the N-terminal domain. The polypeptide is Bifunctional protein GlmU (Thermotoga sp. (strain RQ2)).